Reading from the N-terminus, the 124-residue chain is Probable S-adenosyl-L-methionine-binding protein VNG_1115H (124 aa).

The TsaA-like domain maps to 3-124 (ATPIGYADTR…PVLDLKPALD (122 aa)). S-adenosyl-L-methionine is bound by residues 20 to 22 (PRQ), 58 to 59 (DD), Arg78, and 111 to 114 (AHGS).

It belongs to the tRNA methyltransferase O family.

This is Probable S-adenosyl-L-methionine-binding protein VNG_1115H from Halobacterium salinarum (strain ATCC 700922 / JCM 11081 / NRC-1) (Halobacterium halobium).